Reading from the N-terminus, the 633-residue chain is Kelch-like protein diablo (633 aa).

The interval 1–62 is disordered; sequence MGDLPGSTGG…ARLSHTSEKH (62 aa). Over residues 7–25 the composition is skewed to gly residues; it reads STGGGGGVGGGGNGGGGPT. Residues 26–45 are compositionally biased toward low complexity; sequence IAGTNGNSTTGPGSSTGSTG. The region spanning 80-147 is the BTB domain; that stretch reads CDVVLNVGGR…CYTAHIIVEE (68 aa). The 103-residue stretch at 182 to 284 folds into the BACK domain; sequence CLGIRAFADT…SPKFLVGTVG (103 aa). 6 Kelch repeats span residues 331–377, 379–425, 426–472, 474–519, 521–566, and 567–613; these read VLFA…VLND, LYAV…VLDG, FLYA…VLGG, LYAI…VFNN, IYAV…VVNG, and QLYA…VMRA.

The protein operates within protein modification; protein ubiquitination. Its function is as follows. Probable substrate-specific adapter of an E3 ubiquitin-protein ligase complex which mediates the ubiquitination and subsequent proteasomal degradation of target proteins. May have a role in synapse differentiation and growth. This is Kelch-like protein diablo from Drosophila ananassae (Fruit fly).